Consider the following 153-residue polypeptide: Aspartate carbamoyltransferase regulatory chain (153 aa).

Residues C109, C114, C138, and C141 each contribute to the Zn(2+) site.

The protein belongs to the PyrI family. In terms of assembly, contains catalytic and regulatory chains. Zn(2+) is required as a cofactor.

Functionally, involved in allosteric regulation of aspartate carbamoyltransferase. This is Aspartate carbamoyltransferase regulatory chain from Vibrio campbellii (strain ATCC BAA-1116).